Reading from the N-terminus, the 250-residue chain is MAVTKLVLVRHGESQWNKENRFTGWYDVDLSEKGVSEAKAAGKLLKEEGFSFDFAYTSVLKRAIHTLWNVLDELDQAWLPVEKSWKLNERHYGALQGLNKAETAEKYGDEQVKQWRRGFAVTPPELTKDDERYPGHDPRYAKLSEKELPLTESLALTIDRVIPYWNDTILPRMKSGERVIIAAHGNSLRALVKYLDNMSEDEILELNIPTGVPLVYEFDENFKPLKHYYLGNADEIAAKAAAVANQGKAK.

Substrate-binding positions include 10 to 17, 23 to 24, R62, 89 to 92, K100, 116 to 117, and 185 to 186; these read RHGESQWN, TG, ERHY, RR, and GN. H11 functions as the Tele-phosphohistidine intermediate in the catalytic mechanism. The Proton donor/acceptor role is filled by E89.

Belongs to the phosphoglycerate mutase family. BPG-dependent PGAM subfamily. In terms of assembly, homodimer.

The catalysed reaction is (2R)-2-phosphoglycerate = (2R)-3-phosphoglycerate. Its pathway is carbohydrate degradation; glycolysis; pyruvate from D-glyceraldehyde 3-phosphate: step 3/5. Functionally, catalyzes the interconversion of 2-phosphoglycerate and 3-phosphoglycerate. The sequence is that of 2,3-bisphosphoglycerate-dependent phosphoglycerate mutase from Salmonella agona (strain SL483).